We begin with the raw amino-acid sequence, 886 residues long: Receptor-like kinase TMK2 (886 aa).

Positions M1–S20 are cleaved as a signal peptide. Topologically, residues S21–K460 are extracellular. A glycan (N-linked (GlcNAc...) asparagine) is linked at N41. C48 and C56 are joined by a disulfide. LRR repeat units lie at residues S59–L83, T84–L106, K107–G129, S131–A155, S157–G179, F182–S206, V208–M232, T233–G254, L255–L279, and S281–P302. Residues N154, N167, and N202 are each glycosylated (N-linked (GlcNAc...) asparagine). N237 carries an N-linked (GlcNAc...) asparagine glycan. N298 is a glycosylation site (N-linked (GlcNAc...) asparagine). 2 disulfide bridges follow: C315/C323 and C353/C361. LRR repeat units follow at residues G363–D386, F387–K410, and L411–T438. Residues N377, N394, N401, N432, and N437 are each glycosylated (N-linked (GlcNAc...) asparagine). The helical transmembrane segment at I461–F481 threads the bilayer. Residues L482 to R886 are Cytoplasmic-facing. A Protein kinase domain is found at F547–V827. ATP is bound by residues L553–V561 and K575. Residue D676 is the Proton acceptor of the active site.

The protein belongs to the protein kinase superfamily. Ser/Thr protein kinase family. Expressed in siliques and flowers.

Its subcellular location is the membrane. The catalysed reaction is L-seryl-[protein] + ATP = O-phospho-L-seryl-[protein] + ADP + H(+). It catalyses the reaction L-threonyl-[protein] + ATP = O-phospho-L-threonyl-[protein] + ADP + H(+). Involved in auxin signal transduction and cell expansion and proliferation regulation. The protein is Receptor-like kinase TMK2 of Arabidopsis thaliana (Mouse-ear cress).